Consider the following 379-residue polypeptide: Cobalt-precorrin-5B C(1)-methyltransferase (379 aa).

Belongs to the CbiD family.

It catalyses the reaction Co-precorrin-5B + S-adenosyl-L-methionine = Co-precorrin-6A + S-adenosyl-L-homocysteine. It functions in the pathway cofactor biosynthesis; adenosylcobalamin biosynthesis; cob(II)yrinate a,c-diamide from sirohydrochlorin (anaerobic route): step 6/10. Its function is as follows. Catalyzes the methylation of C-1 in cobalt-precorrin-5B to form cobalt-precorrin-6A. This is Cobalt-precorrin-5B C(1)-methyltransferase from Salmonella paratyphi B (strain ATCC BAA-1250 / SPB7).